Here is a 327-residue protein sequence, read N- to C-terminus: uncharacterized protein (327 aa).

Positions Met1–Ser17 are enriched in low complexity. Residues Met1 to Leu22 form a disordered region. Position 2 is an N-acetylalanine (Ala2). A Phosphoserine modification is found at Ser37. The interval Gly76 to Leu113 is disordered. Ser129 is modified (phosphoserine). Over residues Ser134–Ala148 the composition is skewed to polar residues. The interval Ser134 to Asp299 is disordered. Positions Ser162–Leu176 are enriched in low complexity. Ser175 carries the post-translational modification Phosphoserine. 2 stretches are compositionally biased toward basic and acidic residues: residues Thr182 to Gly202 and Pro233 to Gln252. Ser289 is subject to Phosphoserine.

Its subcellular location is the cytoplasm. This is an uncharacterized protein from Homo sapiens (Human).